A 208-amino-acid polypeptide reads, in one-letter code: Large ribosomal subunit protein uL3 (208 aa).

A disordered region spans residues 130–168 (GGSKTHGQSDRLRAPGSVGGSSFPSRTFKGQRMAGRKGS).

It belongs to the universal ribosomal protein uL3 family. Part of the 50S ribosomal subunit. Forms a cluster with proteins L14 and L19.

Its function is as follows. One of the primary rRNA binding proteins, it binds directly near the 3'-end of the 23S rRNA, where it nucleates assembly of the 50S subunit. The sequence is that of Large ribosomal subunit protein uL3 from Chloroherpeton thalassium (strain ATCC 35110 / GB-78).